Here is an 800-residue protein sequence, read N- to C-terminus: DNA topoisomerase 4 subunit A (800 aa).

One can recognise a Topo IIA-type catalytic domain in the interval 31-495; it reads LPDVRDGLKP…EIEEIKIDKE (465 aa). Residue tyrosine 119 is the O-(5'-phospho-DNA)-tyrosine intermediate of the active site.

It belongs to the type II topoisomerase GyrA/ParC subunit family. ParC type 2 subfamily. In terms of assembly, heterotetramer composed of ParC and ParE.

The protein localises to the cell membrane. The enzyme catalyses ATP-dependent breakage, passage and rejoining of double-stranded DNA.. Topoisomerase IV is essential for chromosome segregation. It relaxes supercoiled DNA. Performs the decatenation events required during the replication of a circular DNA molecule. This Staphylococcus aureus (strain Mu50 / ATCC 700699) protein is DNA topoisomerase 4 subunit A.